Consider the following 179-residue polypeptide: Acireductone dioxygenase (179 aa).

Fe(2+) is bound by residues His88, His90, Glu94, and His133. Positions 88, 90, 94, and 133 each coordinate Ni(2+).

Belongs to the acireductone dioxygenase (ARD) family. In terms of assembly, monomer. Interacts with MMP14. It depends on Fe(2+) as a cofactor. Ni(2+) is required as a cofactor.

Its subcellular location is the cytoplasm. The protein resides in the nucleus. The protein localises to the cell membrane. It catalyses the reaction 1,2-dihydroxy-5-(methylsulfanyl)pent-1-en-3-one + O2 = 4-methylsulfanyl-2-oxobutanoate + formate + 2 H(+). The enzyme catalyses 1,2-dihydroxy-5-(methylsulfanyl)pent-1-en-3-one + O2 = 3-(methylsulfanyl)propanoate + CO + formate + 2 H(+). The protein operates within amino-acid biosynthesis; L-methionine biosynthesis via salvage pathway; L-methionine from S-methyl-5-thio-alpha-D-ribose 1-phosphate: step 5/6. Catalyzes 2 different reactions between oxygen and the acireductone 1,2-dihydroxy-3-keto-5-methylthiopentene (DHK-MTPene) depending upon the metal bound in the active site. Fe-containing acireductone dioxygenase (Fe-ARD) produces formate and 2-keto-4-methylthiobutyrate (KMTB), the alpha-ketoacid precursor of methionine in the methionine recycle pathway. Ni-containing acireductone dioxygenase (Ni-ARD) produces methylthiopropionate, carbon monoxide and formate, and does not lie on the methionine recycle pathway. Also down-regulates cell migration mediated by MMP14. The sequence is that of Acireductone dioxygenase from Macaca mulatta (Rhesus macaque).